Here is a 775-residue protein sequence, read N- to C-terminus: Cation channel sperm-associated protein subunit epsilon-like protein (775 aa).

The N-terminal stretch at methionine 1–alanine 20 is a signal peptide. Asparagine 62 and asparagine 114 each carry an N-linked (GlcNAc...) asparagine glycan.

Belongs to the CATSPERD family.

The polypeptide is Cation channel sperm-associated protein subunit epsilon-like protein (Mus musculus (Mouse)).